The chain runs to 563 residues: Putative solute carrier family 26 member 10P (563 aa).

A run of 5 helical transmembrane segments spans residues 45 to 65 (ALLA…PVLI), 75 to 91 (LSTG…GSAV), 116 to 136 (VGVA…MFVL), 152 to 172 (ALTS…LLGL), and 352 to 372 (LAGL…GPFF). The STAS domain maps to 406 to 541 (RVDFLLQVPG…VSVQDAAAYA (136 aa)).

Belongs to the SLC26A/SulP transporter (TC 2.A.53) family.

The protein localises to the membrane. In terms of biological role, chloride/bicarbonate exchanger. The sequence is that of Putative solute carrier family 26 member 10P (SLC26A10P) from Homo sapiens (Human).